We begin with the raw amino-acid sequence, 384 residues long: Zinc finger protein GLIS2 homolog (384 aa).

The C2H2-type 1 zinc-finger motif lies at 128–153 (FVCNWTDCDRVFDTLDALAQHVTQRH). Residues 163 to 190 (YYCRWRGCQRSERGFNARYKMLVHTRTH) form a C2H2-type 2; degenerate zinc finger. 3 consecutive C2H2-type zinc fingers follow at residues 196 to 218 (HRCH…IRSH), 224 to 248 (YKCS…TRTH), and 254 to 280 (YMCK…TFKH). Positions 321 to 343 (SSSSARYYDDSNNEPSDYSLKPK) are disordered.

This sequence belongs to the GLI C2H2-type zinc-finger protein family.

The protein resides in the nucleus. Its function is as follows. Transcription factor which represses a set of lipase genes involved in fat catabolism. The sequence is that of Zinc finger protein GLIS2 homolog (sug) from Drosophila melanogaster (Fruit fly).